The following is a 708-amino-acid chain: Exocyst complex component 5 (708 aa).

Alanine 2 carries the N-acetylalanine modification. Positions 40–101 form a coiled coil; it reads KRLLEEFVNH…AFQHFQELDE (62 aa). 3 positions are modified to phosphothreonine: threonine 122, threonine 395, and threonine 405. Position 412 is a phosphoserine (serine 412).

The protein belongs to the SEC10 family. As to quaternary structure, the exocyst complex is composed of EXOC1, EXOC2, EXOC3, EXOC4, EXOC5, EXOC6, EXOC7 and EXOC8. Interacts with EXOC3L1. Ubiquitous.

The protein localises to the cytoplasm. It localises to the midbody. Functionally, component of the exocyst complex involved in the docking of exocytic vesicles with fusion sites on the plasma membrane. In Rattus norvegicus (Rat), this protein is Exocyst complex component 5 (Exoc5).